Here is a 344-residue protein sequence, read N- to C-terminus: 3-isopropylmalate dehydrogenase (344 aa).

74-87 (GPKWDALPRKIRPE) is a binding site for NAD(+). 4 residues coordinate substrate: Arg-94, Arg-104, Arg-132, and Asp-217. Positions 217, 241, and 245 each coordinate Mg(2+). NAD(+) is bound at residue 274 to 286 (GSAPDIAGKGIAN).

The protein belongs to the isocitrate and isopropylmalate dehydrogenases family. LeuB type 1 subfamily. As to quaternary structure, homodimer. It depends on Mg(2+) as a cofactor. Mn(2+) is required as a cofactor.

It is found in the cytoplasm. The enzyme catalyses (2R,3S)-3-isopropylmalate + NAD(+) = 4-methyl-2-oxopentanoate + CO2 + NADH. It participates in amino-acid biosynthesis; L-leucine biosynthesis; L-leucine from 3-methyl-2-oxobutanoate: step 3/4. In terms of biological role, catalyzes the oxidation of 3-carboxy-2-hydroxy-4-methylpentanoate (3-isopropylmalate) to 3-carboxy-4-methyl-2-oxopentanoate. The product decarboxylates to 4-methyl-2 oxopentanoate. This chain is 3-isopropylmalate dehydrogenase (leuB), found in Thermus aquaticus.